A 306-amino-acid polypeptide reads, in one-letter code: Tyrosine recombinase XerC (306 aa).

The region spanning 6–92 is the Core-binding (CB) domain; it reads NTLYLQTKPY…ALRQWFSYLI (87 aa). Positions 113–292 constitute a Tyr recombinase domain; it reads RLPKNIDAEQ…DFQHLAKIYD (180 aa). Active-site residues include arginine 152, lysine 176, histidine 244, arginine 247, and histidine 270. Tyrosine 279 acts as the O-(3'-phospho-DNA)-tyrosine intermediate in catalysis.

This sequence belongs to the 'phage' integrase family. XerC subfamily. As to quaternary structure, forms a cyclic heterotetrameric complex composed of two molecules of XerC and two molecules of XerD.

The protein localises to the cytoplasm. In terms of biological role, site-specific tyrosine recombinase, which acts by catalyzing the cutting and rejoining of the recombining DNA molecules. The XerC-XerD complex is essential to convert dimers of the bacterial chromosome into monomers to permit their segregation at cell division. It also contributes to the segregational stability of plasmids. The sequence is that of Tyrosine recombinase XerC from Actinobacillus pleuropneumoniae serotype 7 (strain AP76).